The chain runs to 830 residues: Ent-cassa-12,15-diene synthase (830 aa).

The disordered stretch occupies residues 1–50 (MMLLGSPSSGGYGGKFAGASPAGGTTTMAPSAKQPSSRAPPPGITGGRND). The span at 23 to 37 (GGTTTMAPSAKQPSS) shows a compositional bias: polar residues. Mg(2+)-binding residues include aspartate 577, aspartate 581, asparagine 721, and glutamate 729. The DDXXD motif signature appears at 577 to 581 (DDLFD).

It belongs to the terpene synthase family. Mg(2+) serves as cofactor. In terms of tissue distribution, expressed in roots and stems.

The catalysed reaction is ent-copalyl diphosphate = ent-cassa-12,15-diene + diphosphate. Involved in phytocassane phytoalexins biosynthesis. Catalyzes the conversion of ent-copalyl diphosphate to the phytoalexin precursor ent-cassa-12,15-diene. The polypeptide is Ent-cassa-12,15-diene synthase (KSL7) (Oryza sativa subsp. indica (Rice)).